Here is a 589-residue protein sequence, read N- to C-terminus: Aspartate--tRNA(Asp/Asn) ligase (589 aa).

L-aspartate is bound at residue Glu-170. Residues 194-197 (QLFK) are aspartate. Arg-216 is an L-aspartate binding site. ATP is bound by residues 216–218 (RDE) and Gln-225. His-448 contacts L-aspartate. An ATP-binding site is contributed by Glu-482. L-aspartate is bound at residue Arg-489. 534 to 537 (GWDR) lines the ATP pocket. The disordered stretch occupies residues 563–589 (PLTDAPASITAQQRKESGIDTKPKEVE). Over residues 575–589 (QRKESGIDTKPKEVE) the composition is skewed to basic and acidic residues.

It belongs to the class-II aminoacyl-tRNA synthetase family. Type 1 subfamily. As to quaternary structure, homodimer.

The protein localises to the cytoplasm. It catalyses the reaction tRNA(Asx) + L-aspartate + ATP = L-aspartyl-tRNA(Asx) + AMP + diphosphate. Its function is as follows. Aspartyl-tRNA synthetase with relaxed tRNA specificity since it is able to aspartylate not only its cognate tRNA(Asp) but also tRNA(Asn). Reaction proceeds in two steps: L-aspartate is first activated by ATP to form Asp-AMP and then transferred to the acceptor end of tRNA(Asp/Asn). In Mycobacterium leprae (strain Br4923), this protein is Aspartate--tRNA(Asp/Asn) ligase.